The sequence spans 267 residues: Phosphatidylglycerol--prolipoprotein diacylglyceryl transferase (267 aa).

4 consecutive transmembrane segments (helical) span residues 10 to 30 (VAIA…VVGF), 54 to 74 (LLFY…ALFY), 90 to 110 (WDGG…AWLF), and 116 to 136 (LAFF…LGAG). Position 137 (Arg137) interacts with a 1,2-diacyl-sn-glycero-3-phospho-(1'-sn-glycerol). 3 consecutive transmembrane segments (helical) span residues 169-189 (PSPL…LWWV), 197-217 (GMIS…VEFV), and 231-251 (WLTM…ALCV).

This sequence belongs to the Lgt family.

The protein resides in the cell inner membrane. It catalyses the reaction L-cysteinyl-[prolipoprotein] + a 1,2-diacyl-sn-glycero-3-phospho-(1'-sn-glycerol) = an S-1,2-diacyl-sn-glyceryl-L-cysteinyl-[prolipoprotein] + sn-glycerol 1-phosphate + H(+). It participates in protein modification; lipoprotein biosynthesis (diacylglyceryl transfer). Functionally, catalyzes the transfer of the diacylglyceryl group from phosphatidylglycerol to the sulfhydryl group of the N-terminal cysteine of a prolipoprotein, the first step in the formation of mature lipoproteins. The protein is Phosphatidylglycerol--prolipoprotein diacylglyceryl transferase of Chromohalobacter salexigens (strain ATCC BAA-138 / DSM 3043 / CIP 106854 / NCIMB 13768 / 1H11).